The following is a 233-amino-acid chain: MDSASDAGERRPARAALRVLSLIEQRVVAVLVEKQHTVSDSYPLSLNTLLLGCNQKTAREPVINATESEVLAAVDELKRLSLVIEVSGSRVARYEHNLQRVLGVPSQAAAILTLLMLRGPQTAAELRANTERLHRFADISSVEGFLDELALREPPLVVKLPRAPGSREARWAQLLGGPPEVSVAAPAGAAPEDLVTAGEIQALRANQHRLQAEVVMLRAQLHRLAAELGVDLS.

This sequence belongs to the UPF0502 family.

The chain is UPF0502 protein Mpe_A1449 from Methylibium petroleiphilum (strain ATCC BAA-1232 / LMG 22953 / PM1).